Consider the following 176-residue polypeptide: Protein GrpE (176 aa).

The interval 1 to 31 is disordered; the sequence is MSEQKQEFENENAENSEHLQDENLQNIEDVE.

Belongs to the GrpE family. As to quaternary structure, homodimer.

It is found in the cytoplasm. Participates actively in the response to hyperosmotic and heat shock by preventing the aggregation of stress-denatured proteins, in association with DnaK and GrpE. It is the nucleotide exchange factor for DnaK and may function as a thermosensor. Unfolded proteins bind initially to DnaJ; upon interaction with the DnaJ-bound protein, DnaK hydrolyzes its bound ATP, resulting in the formation of a stable complex. GrpE releases ADP from DnaK; ATP binding to DnaK triggers the release of the substrate protein, thus completing the reaction cycle. Several rounds of ATP-dependent interactions between DnaJ, DnaK and GrpE are required for fully efficient folding. This chain is Protein GrpE, found in Campylobacter jejuni subsp. doylei (strain ATCC BAA-1458 / RM4099 / 269.97).